A 572-amino-acid polypeptide reads, in one-letter code: Proline--tRNA ligase (572 aa).

Belongs to the class-II aminoacyl-tRNA synthetase family. ProS type 1 subfamily. In terms of assembly, homodimer.

The protein localises to the cytoplasm. The catalysed reaction is tRNA(Pro) + L-proline + ATP = L-prolyl-tRNA(Pro) + AMP + diphosphate. Functionally, catalyzes the attachment of proline to tRNA(Pro) in a two-step reaction: proline is first activated by ATP to form Pro-AMP and then transferred to the acceptor end of tRNA(Pro). As ProRS can inadvertently accommodate and process non-cognate amino acids such as alanine and cysteine, to avoid such errors it has two additional distinct editing activities against alanine. One activity is designated as 'pretransfer' editing and involves the tRNA(Pro)-independent hydrolysis of activated Ala-AMP. The other activity is designated 'posttransfer' editing and involves deacylation of mischarged Ala-tRNA(Pro). The misacylated Cys-tRNA(Pro) is not edited by ProRS. The protein is Proline--tRNA ligase of Escherichia fergusonii (strain ATCC 35469 / DSM 13698 / CCUG 18766 / IAM 14443 / JCM 21226 / LMG 7866 / NBRC 102419 / NCTC 12128 / CDC 0568-73).